Reading from the N-terminus, the 125-residue chain is Fluoride-specific ion channel FluC (125 aa).

4 helical membrane-spanning segments follow: residues 6-26, 34-54, 68-88, and 98-118; these read GFIA…SGLV, FPWG…LVWE, AVLL…IFES, and LALL…LFAG. Na(+) contacts are provided by G76 and T79.

This sequence belongs to the fluoride channel Fluc/FEX (TC 1.A.43) family.

It is found in the cell inner membrane. The catalysed reaction is fluoride(in) = fluoride(out). With respect to regulation, na(+) is not transported, but it plays an essential structural role and its presence is essential for fluoride channel function. Functionally, fluoride-specific ion channel. Important for reducing fluoride concentration in the cell, thus reducing its toxicity. In Solidesulfovibrio magneticus (strain ATCC 700980 / DSM 13731 / RS-1) (Desulfovibrio magneticus), this protein is Fluoride-specific ion channel FluC.